Here is a 510-residue protein sequence, read N- to C-terminus: Olfactomedin-4 (510 aa).

The N-terminal stretch at 1–20 (MRPGLSFLLALLFFLGQAAG) is a signal peptide. N-linked (GlcNAc...) asparagine glycosylation is found at Asn72 and Asn136. Residues 155–234 (DFELIKVEVK…ECEASKDQNT (80 aa)) adopt a coiled-coil conformation. Residues 245-507 (SCGHGGVVNI…LLNYDLSVLQ (263 aa)) enclose the Olfactomedin-like domain. Cys246 and Cys437 are oxidised to a cystine. Asn253 is a glycosylation site (N-linked (GlcNAc...) asparagine).

Homomultimer; disulfide-linked. Interacts with NDUFA13. Interacts with cell surface lectins (locutions ricinus communis agglutinin I, concanavalin-A and wheat germ agglutinin) and cadherin. In terms of processing, N-glycosylated. As to expression, expressed during myeloid lineage development. Much higher expression in bone marrow neutrophils than in peripheral blood neutrophils (at protein level). Strongly expressed in the prostate, small intestine and colon and moderately expressed in the bone marrow and stomach. Overexpressed in some pancreatic cancer tissues.

Its subcellular location is the secreted. It localises to the extracellular space. The protein resides in the mitochondrion. Functionally, may promote proliferation of pancreatic cancer cells by favoring the transition from the S to G2/M phase. In myeloid leukemic cell lines, inhibits cell growth and induces cell differentiation and apoptosis. May play a role in the inhibition of EIF4EBP1 phosphorylation/deactivation. Facilitates cell adhesion, most probably through interaction with cell surface lectins and cadherin. The sequence is that of Olfactomedin-4 (OLFM4) from Homo sapiens (Human).